We begin with the raw amino-acid sequence, 858 residues long: Bifunctional uridylyltransferase/uridylyl-removing enzyme (858 aa).

Residues 1 to 324 are uridylyltransferase; sequence MSASVAEPPP…PATSGVTRVL (324 aa). A uridylyl-removing region spans residues 325-681; the sequence is SPGRFVEKQG…ARPSPVGDAL (357 aa). Residues 443-565 enclose the HD domain; the sequence is VDQHILMVLR…VGSERRLTAL (123 aa). ACT domains follow at residues 682 to 761 and 790 to 858; these read QVLV…PEPS and ILSV…AIAV.

Belongs to the GlnD family. Mg(2+) serves as cofactor.

It carries out the reaction [protein-PII]-L-tyrosine + UTP = [protein-PII]-uridylyl-L-tyrosine + diphosphate. The enzyme catalyses [protein-PII]-uridylyl-L-tyrosine + H2O = [protein-PII]-L-tyrosine + UMP + H(+). With respect to regulation, uridylyltransferase (UTase) activity is inhibited by glutamine, while glutamine activates uridylyl-removing (UR) activity. Functionally, modifies, by uridylylation and deuridylylation, the PII regulatory proteins (GlnB and homologs), in response to the nitrogen status of the cell that GlnD senses through the glutamine level. Under low glutamine levels, catalyzes the conversion of the PII proteins and UTP to PII-UMP and PPi, while under higher glutamine levels, GlnD hydrolyzes PII-UMP to PII and UMP (deuridylylation). Thus, controls uridylylation state and activity of the PII proteins, and plays an important role in the regulation of nitrogen assimilation and metabolism. The chain is Bifunctional uridylyltransferase/uridylyl-removing enzyme from Burkholderia mallei (strain ATCC 23344).